A 331-amino-acid polypeptide reads, in one-letter code: High-affinity nickel-transport protein NixA (331 aa).

Topologically, residues 1 to 5 (MKLWF) are cytoplasmic. A helical membrane pass occupies residues 6 to 26 (PYFLAIVFLHALGLALLFMAN). Topologically, residues 27–33 (NASFYAA) are periplasmic. Residues 34–54 (ASMAYMLGAKHAFDADHIACI) form a helical membrane-spanning segment. Residues 55–66 (DNTIRKLTQQGK) lie on the Cytoplasmic side of the membrane. The helical transmembrane segment at 67 to 87 (NAYGVGFYFSMGHSSVVILMT) threads the bilayer. Residues 88 to 113 (IISAFAIAWAKEHTPMLEEIGGVVGT) lie on the Periplasmic side of the membrane. Residues 114–135 (LVSGLFLLIIGLLNAIILLDLL) form a helical membrane-spanning segment. Residues 136-178 (KIFKKSHSNESLSQQQNEEIERLLTSRGLLNRFFKPLFNFVSK) lie on the Cytoplasmic side of the membrane. The helical transmembrane segment at 179–199 (SWHIYPIGFLFGLGFDTASEI) threads the bilayer. Topologically, residues 200–225 (ALLALSSSAIKVSMVGMLSLPILFAA) are periplasmic. Residues 226-246 (GMSLFDTLDGAFMLKAYDWAF) traverse the membrane as a helical segment. Residues 247-252 (KTPLRK) lie on the Cytoplasmic side of the membrane. A helical membrane pass occupies residues 253-273 (IYYNISITALSVFIALFIGLI). Residues 274-302 (ELFQVVSEKLHLKFENRLLRALQSLEFTD) lie on the Periplasmic side of the membrane. A helical transmembrane segment spans residues 303–322 (LGYYLVGLFVIAFLGSFFLW). Topologically, residues 323-331 (KIKFSKLES) are cytoplasmic.

This sequence belongs to the NiCoT transporter (TC 2.A.52) family.

The protein localises to the cell inner membrane. In terms of biological role, high-affinity nickel intake protein. Imports nickel ions in an energy-dependent fashion. Necessary for the expression of catalytically active urease. The polypeptide is High-affinity nickel-transport protein NixA (nixA) (Helicobacter pylori (strain ATCC 700392 / 26695) (Campylobacter pylori)).